A 418-amino-acid chain; its full sequence is Glutamyl-tRNA reductase (418 aa).

Substrate contacts are provided by residues 49 to 52 (TCNR), Ser109, 114 to 116 (EPQ), and Gln120. The Nucleophile role is filled by Cys50. An NADP(+)-binding site is contributed by 189 to 194 (GAGETI).

It belongs to the glutamyl-tRNA reductase family. Homodimer.

It catalyses the reaction (S)-4-amino-5-oxopentanoate + tRNA(Glu) + NADP(+) = L-glutamyl-tRNA(Glu) + NADPH + H(+). It participates in porphyrin-containing compound metabolism; protoporphyrin-IX biosynthesis; 5-aminolevulinate from L-glutamyl-tRNA(Glu): step 1/2. In terms of biological role, catalyzes the NADPH-dependent reduction of glutamyl-tRNA(Glu) to glutamate 1-semialdehyde (GSA). The chain is Glutamyl-tRNA reductase from Cronobacter sakazakii (strain ATCC BAA-894) (Enterobacter sakazakii).